Consider the following 317-residue polypeptide: MKKLVIATRGSKLALWQAEHVKSCIEGQHPGVSVELLVLKTRGDIILDVPLAKVGGKGLFVKEIEEALLDGRADLAVHSMKDVPMELPEGLVLGIIPEREEPSDTFLSVHHDSLAALPHGATVGTSSLRRQSQLLALRPDLNVVSLRGNVDTRLRKLSEGQFDAIIMATAGMKRLGLSAPRSEVLGPPAFLPAVGQGALGIEFRADRADLHELLAFMEHTPTRIRVEAERGFLAGLQGGCQVPIAGHAVMTGDGTFALEGLVADLTGARVIRRTMNGVSAPDGAQARQIGLDLAAQLVADGAGEILAEVYGSGEAVN.

The residue at position 240 (C240) is an S-(dipyrrolylmethanemethyl)cysteine.

It belongs to the HMBS family. In terms of assembly, monomer. The cofactor is dipyrromethane.

It carries out the reaction 4 porphobilinogen + H2O = hydroxymethylbilane + 4 NH4(+). The protein operates within porphyrin-containing compound metabolism; protoporphyrin-IX biosynthesis; coproporphyrinogen-III from 5-aminolevulinate: step 2/4. Its function is as follows. Tetrapolymerization of the monopyrrole PBG into the hydroxymethylbilane pre-uroporphyrinogen in several discrete steps. This is Porphobilinogen deaminase from Nitratidesulfovibrio vulgaris (strain DSM 19637 / Miyazaki F) (Desulfovibrio vulgaris).